Here is an 89-residue protein sequence, read N- to C-terminus: Small ribosomal subunit protein uS14A (89 aa).

The protein belongs to the universal ribosomal protein uS14 family. As to quaternary structure, part of the 30S ribosomal subunit. Contacts proteins S3 and S10.

Binds 16S rRNA, required for the assembly of 30S particles and may also be responsible for determining the conformation of the 16S rRNA at the A site. This Pediococcus pentosaceus (strain ATCC 25745 / CCUG 21536 / LMG 10740 / 183-1w) protein is Small ribosomal subunit protein uS14A.